The sequence spans 639 residues: Carbon monoxide dehydrogenase (639 aa).

[4Fe-4S] cluster contacts are provided by cysteine 41, cysteine 49, cysteine 50, cysteine 53, cysteine 58, and cysteine 72. Histidine 265, cysteine 300, cysteine 338, cysteine 451, cysteine 481, and cysteine 531 together coordinate [Ni-4Fe-4S] cluster.

This sequence belongs to the Ni-containing carbon monoxide dehydrogenase family. Homodimer. It depends on [4Fe-4S] cluster as a cofactor. [Ni-4Fe-4S] cluster serves as cofactor.

It localises to the cytoplasm. It is found in the cell inner membrane. The catalysed reaction is CO + 2 oxidized [2Fe-2S]-[ferredoxin] + H2O = 2 reduced [2Fe-2S]-[ferredoxin] + CO2 + 2 H(+). Its function is as follows. Allows growth in a CO-dependent manner in the dark. CODH oxidizes carbon monoxide coupled, via CooF, to the reduction of a hydrogen cation by a hydrogenase (possibly CooH). This chain is Carbon monoxide dehydrogenase (cooS), found in Rhodospirillum rubrum.